The sequence spans 570 residues: Sulfite reductase [NADPH] hemoprotein beta-component (570 aa).

[4Fe-4S] cluster is bound by residues Cys434, Cys440, Cys479, and Cys483. Cys483 lines the siroheme pocket.

It belongs to the nitrite and sulfite reductase 4Fe-4S domain family. As to quaternary structure, alpha(8)-beta(8). The alpha component is a flavoprotein, the beta component is a hemoprotein. Siroheme serves as cofactor. The cofactor is [4Fe-4S] cluster.

It carries out the reaction hydrogen sulfide + 3 NADP(+) + 3 H2O = sulfite + 3 NADPH + 4 H(+). It participates in sulfur metabolism; hydrogen sulfide biosynthesis; hydrogen sulfide from sulfite (NADPH route): step 1/1. Functionally, component of the sulfite reductase complex that catalyzes the 6-electron reduction of sulfite to sulfide. This is one of several activities required for the biosynthesis of L-cysteine from sulfate. In Escherichia coli O1:K1 / APEC, this protein is Sulfite reductase [NADPH] hemoprotein beta-component.